The sequence spans 121 residues: Phospholipase A2 homolog EPL_00195 (121 aa).

7 disulfide bridges follow: Cys25–Cys114, Cys27–Cys43, Cys42–Cys94, Cys48–Cys121, Cys49–Cys87, Cys56–Cys80, and Cys74–Cys85. Residues 104–116 (KKYRIYPNFLCRG) are important for membrane-damaging activities in eukaryotes and bacteria; heparin-binding.

Belongs to the phospholipase A2 family. Group II subfamily. S49 sub-subfamily. As to quaternary structure, monomer. In terms of tissue distribution, expressed by the venom gland.

The protein resides in the secreted. Functionally, snake venom phospholipase A2 homolog that lacks enzymatic activity. Shows high myotoxin activities and displays edema-inducing activities. Has cytotoxic activities against HUVEC cells (LC(50)=2.5 uL) and human lung adenocarcinoma A549 cells (LC(50)=2.9 uL). This chain is Phospholipase A2 homolog EPL_00195, found in Echis pyramidum leakeyi (Leakey's carpet viper).